We begin with the raw amino-acid sequence, 618 residues long: Elongation factor 4 (618 aa).

The region spanning 17–198 (AIIRNFCIIA…KIVRDLPAPE (182 aa)) is the tr-type G domain. Residues 29-34 (DHGKST) and 145-148 (NKID) contribute to the GTP site.

The protein belongs to the TRAFAC class translation factor GTPase superfamily. Classic translation factor GTPase family. LepA subfamily.

The protein localises to the cell membrane. The catalysed reaction is GTP + H2O = GDP + phosphate + H(+). In terms of biological role, required for accurate and efficient protein synthesis under certain stress conditions. May act as a fidelity factor of the translation reaction, by catalyzing a one-codon backward translocation of tRNAs on improperly translocated ribosomes. Back-translocation proceeds from a post-translocation (POST) complex to a pre-translocation (PRE) complex, thus giving elongation factor G a second chance to translocate the tRNAs correctly. Binds to ribosomes in a GTP-dependent manner. The polypeptide is Elongation factor 4 (Pseudarthrobacter chlorophenolicus (strain ATCC 700700 / DSM 12829 / CIP 107037 / JCM 12360 / KCTC 9906 / NCIMB 13794 / A6) (Arthrobacter chlorophenolicus)).